Reading from the N-terminus, the 658-residue chain is NADH-ubiquinone oxidoreductase chain 5 (658 aa).

Helical transmembrane passes span 4 to 23 (TLIV…GRKI), 30 to 52 (IITC…EVGI), 81 to 103 (LTVS…SISY), 112 to 129 (RFFS…ILVT), 133 to 155 (YLLM…NFWF), 168 to 190 (LLTN…WSFG), 200 to 222 (LAPY…GATA), 243 to 262 (VSAL…LLMR), 272 to 294 (TVLI…IGLF), 301 to 319 (VIAY…GIGL), 329 to 351 (LVNH…HSVA), 364 to 386 (PFLP…VPFM), 409 to 431 (IVYF…VLYL), 452 to 471 (LFLN…FGFL), 505 to 527 (VPVL…SILY), 607 to 629 (LSTG…YIST), and 639 to 656 (LLIL…NKLL).

Belongs to the complex I subunit 5 family.

It localises to the mitochondrion inner membrane. The enzyme catalyses a ubiquinone + NADH + 5 H(+)(in) = a ubiquinol + NAD(+) + 4 H(+)(out). Core subunit of the mitochondrial membrane respiratory chain NADH dehydrogenase (Complex I) that is believed to belong to the minimal assembly required for catalysis. Complex I functions in the transfer of electrons from NADH to the respiratory chain. The immediate electron acceptor for the enzyme is believed to be ubiquinone. This is NADH-ubiquinone oxidoreductase chain 5 (nad5) from Talaromyces marneffei (Penicillium marneffei).